The sequence spans 77 residues: Lantipeptide prochlorosin 4.3 (77 aa).

A propeptide spanning residues 1 to 64 is cleaved from the precursor; it reads MSEEQLKAFI…DDELEGVAGG (64 aa). At Thr-65 the chain carries 2,3-didehydrobutyrine. The lanthionine (Ser-Cys) cross-link spans 67-70; that stretch reads SGGC. A cross-link (beta-methyllanthionine (Thr-Cys)) is located at residues 72–76; sequence TSMFC.

In terms of processing, cross-links are proved in vitro, when coepressed in E.coli with the ProcM lanthionine synthetase. Post-translationally, the lanthionine residue has both a DL configuration (with 2S,6R stereochemistry) and a LL configuration (with 2R,6R stereochemistry). DL and LL diastomers have a 4:1 ratio. It is unknown whether nonenzymatic cyclization occur, but authors favor a model in which ProcM does generate all thioether cross-links. The beta-methyllanthionine residue has a DL configuration (with 2S,3S,6R stereochemistry). Maturation of prochlorosin involves the enzymatic conversion of Thr, and Ser into dehydrated AA and the formation of thioether bonds with cysteines. This is followed by membrane translocation and cleavage of the modified precursor.

The protein resides in the secreted. Its function is as follows. Lanthionine-containing peptide (lantipeptide) with unknown function. Does not show antibiotic activity against Lactococcus lactis 117 and Bacillus subtilis 6633 bacteria. Organisms that produce this peptide live in oligotrophic environments at very dilute concentrations, suggesting this peptide is not secreted to influence other bacteria. In Prochlorococcus marinus (strain MIT 9313), this protein is Lantipeptide prochlorosin 4.3.